Here is a 197-residue protein sequence, read N- to C-terminus: Probable GTP-binding protein EngB (197 aa).

Residues 22-195 (NLPEIAFVGR…VDYLFDDLVE (174 aa)) enclose the EngB-type G domain. GTP is bound by residues 30–37 (GRSNVGKS), 57–61 (GKTRL), 75–78 (DLPG), 142–145 (TKSD), and 174–176 (FSS). Mg(2+)-binding residues include Ser-37 and Thr-59.

The protein belongs to the TRAFAC class TrmE-Era-EngA-EngB-Septin-like GTPase superfamily. EngB GTPase family. Mg(2+) is required as a cofactor.

Its function is as follows. Necessary for normal cell division and for the maintenance of normal septation. In Clostridium perfringens (strain SM101 / Type A), this protein is Probable GTP-binding protein EngB.